We begin with the raw amino-acid sequence, 529 residues long: Bifunctional purine biosynthesis protein PurH (529 aa).

Residues 1 to 148 form the MGS-like domain; sequence MQQPRPIRRA…KNHKDVAIVV (148 aa).

This sequence belongs to the PurH family.

It catalyses the reaction (6R)-10-formyltetrahydrofolate + 5-amino-1-(5-phospho-beta-D-ribosyl)imidazole-4-carboxamide = 5-formamido-1-(5-phospho-D-ribosyl)imidazole-4-carboxamide + (6S)-5,6,7,8-tetrahydrofolate. The enzyme catalyses IMP + H2O = 5-formamido-1-(5-phospho-D-ribosyl)imidazole-4-carboxamide. It participates in purine metabolism; IMP biosynthesis via de novo pathway; 5-formamido-1-(5-phospho-D-ribosyl)imidazole-4-carboxamide from 5-amino-1-(5-phospho-D-ribosyl)imidazole-4-carboxamide (10-formyl THF route): step 1/1. The protein operates within purine metabolism; IMP biosynthesis via de novo pathway; IMP from 5-formamido-1-(5-phospho-D-ribosyl)imidazole-4-carboxamide: step 1/1. In Serratia proteamaculans (strain 568), this protein is Bifunctional purine biosynthesis protein PurH.